The following is a 938-amino-acid chain: MKFIFYLFSIFCCLCSCAQSQNISGRPDAVRIGAQFARNSTIGRVAAVAVLAAVNDINNDSNILPGTKLDLHMHDSSCNRFLGIVQALQFMEKDTVAIIGPLSSTTAHVLSHLANELHVPLMSFSATDPTLSSLEYPFFVRTTVSDQFQMTAVADLVEYYGWKQVTTIFVDNDYGRNAISSLGDELSKRRSKILYKAPFRPGASNNEIADVLIKVAMMESRVIILHANPDSGLVVFQQALKLGMVSNGYAWIATDWLTSYLDPSVHLDIGLLSTMQGVLTLRHHTENTRRKSMLSSKWSELLKEDSGHSRFLLSTYGLYAYDTVWMLAHALDAFFNSGGNISFSPDPKLNEISGRGLNLEALSVFDGGQLLLEKIHQVDFLGATGPVKFDSGGNLIQPAYDIVSIIGSGLRTVGYWSNYSGLSVISPETLYKKPANRTRETQKLHDVIWPGETINKPRGWVFPNNGNEIKIGVPDRVSYRQFVSVDSETGMVRGLCIDVFVAAINLLAYPVPYRFVPFGNNRENPSYSELINKIITDDFDAVVGDVTIITNRTKVVDFTQPYVSSGLVVLTSVKRQNSGGWAFLQPFTIKMWTVTGLFFLIIGTVVWMLEHRINDEFRGPPAKQLITVFWFSFSTLFFAHREDTRSTLGRFVIIIWLFVVLIIQSSYTASLTSILTVQQLTSPITGIDSLITSDVPIGFQVGSFAENYLAQELGVAHSRLKALGSPEEYKKALDLGPSKGGVAAIVDERPYIELFLYQNPKFAVVGSEFTKSGWGFAFPRDSPLSVDLSTAILELSENGDLQRIHDKWLASDMSSMSQASELDQDPDRLDVYSFSALFLICGLACIFALAIHACNLFYQYSRHAAEEDPAALQPSASDGSRSLSRRSKLQSFLSFADRREADIRRAAKEKASGLGGSGGSMSGVSFTSSGSGSTTASC.

An N-terminal signal peptide occupies residues 1–20 (MKFIFYLFSIFCCLCSCAQS). Residues 21 to 588 (QNISGRPDAV…GGWAFLQPFT (568 aa)) are Extracellular-facing. 7 N-linked (GlcNAc...) asparagine glycosylation sites follow: N22, N39, N59, N340, N418, N436, and N551. The helical transmembrane segment at 589–609 (IKMWTVTGLFFLIIGTVVWML) threads the bilayer. The Cytoplasmic portion of the chain corresponds to 610 to 618 (EHRINDEFR). A helical transmembrane segment spans residues 619 to 639 (GPPAKQLITVFWFSFSTLFFA). The Cytoplasmic portion of the chain corresponds to 640 to 650 (HREDTRSTLGR). A helical membrane pass occupies residues 651-671 (FVIIIWLFVVLIIQSSYTASL). The Extracellular portion of the chain corresponds to 672–830 (TSILTVQQLT…ELDQDPDRLD (159 aa)). Residues 831–851 (VYSFSALFLICGLACIFALAI) traverse the membrane as a helical segment. Over 852-938 (HACNLFYQYS…SGSGSTTASC (87 aa)) the chain is Cytoplasmic. The disordered stretch occupies residues 906–938 (AAKEKASGLGGSGGSMSGVSFTSSGSGSTTASC). Over residues 922–938 (SGVSFTSSGSGSTTASC) the composition is skewed to low complexity.

The protein belongs to the glutamate-gated ion channel (TC 1.A.10.1) family. In terms of assembly, may form homomultimers. In terms of tissue distribution, expressed at low levels in roots and leaves.

The protein resides in the membrane. Its function is as follows. Glutamate-gated receptor that probably acts as a non-selective cation channel. Involved in root development. May regulate cell proliferation and cell death in the root apex. In Oryza sativa subsp. japonica (Rice), this protein is Glutamate receptor 3.1 (GLR3.1).